The following is a 206-amino-acid chain: Putative acetyltransferase OgpAT (206 aa).

An N-acetyltransferase domain is found at 5–205; sequence VVIRRATAAD…EVVVGRRLLD (201 aa). Acetyl-CoA is bound by residues 135-138, 144-148, 175-177, and His184; these read HIDL, GRGVG, and NPR.

The protein belongs to the acetyltransferase family. In terms of assembly, monomer.

Its function is as follows. Binds acetyl-CoA, but not butyryl-CoA or decanoyl-CoA. May have acetyltransferase activity. The sequence is that of Putative acetyltransferase OgpAT from Oceanicola granulosus (strain ATCC BAA-861 / DSM 15982 / KCTC 12143 / HTCC2516).